The following is a 718-amino-acid chain: Polyribonucleotide nucleotidyltransferase (718 aa).

Asp-496 and Asp-502 together coordinate Mg(2+). Residues 563-622 (PRLLTIKIDPDMIGLVIGPGGKTIKGITEETGAKIDIEDDGTVTISAVDENKAKRARNIV) enclose the KH domain. One can recognise an S1 motif domain in the interval 632–700 (GDVYAGRVTR…NKGRINLTRL (69 aa)).

The protein belongs to the polyribonucleotide nucleotidyltransferase family. The cofactor is Mg(2+).

It localises to the cytoplasm. The catalysed reaction is RNA(n+1) + phosphate = RNA(n) + a ribonucleoside 5'-diphosphate. Involved in mRNA degradation. Catalyzes the phosphorolysis of single-stranded polyribonucleotides processively in the 3'- to 5'-direction. This is Polyribonucleotide nucleotidyltransferase from Trichormus variabilis (strain ATCC 29413 / PCC 7937) (Anabaena variabilis).